The sequence spans 105 residues: Large ribosomal subunit protein uL24 (105 aa).

It belongs to the universal ribosomal protein uL24 family. Part of the 50S ribosomal subunit.

In terms of biological role, one of two assembly initiator proteins, it binds directly to the 5'-end of the 23S rRNA, where it nucleates assembly of the 50S subunit. One of the proteins that surrounds the polypeptide exit tunnel on the outside of the subunit. This Mycobacterium sp. (strain JLS) protein is Large ribosomal subunit protein uL24.